Reading from the N-terminus, the 170-residue chain is Transcription factor E (170 aa).

In terms of domain architecture, HTH TFE/IIEalpha-type spans 1 to 93; sequence MKDAYLYVVE…AWYVDDEIIR (93 aa).

This sequence belongs to the TFE family. In terms of assembly, monomer. Interaction with RNA polymerase subunits RpoF and RpoE is necessary for Tfe stimulatory transcription activity. Able to interact with Tbp and RNA polymerase in the absence of DNA promoter. Interacts both with the preinitiation and elongation complexes.

Functionally, transcription factor that plays a role in the activation of archaeal genes transcribed by RNA polymerase. Facilitates transcription initiation by enhancing TATA-box recognition by TATA-box-binding protein (Tbp), and transcription factor B (Tfb) and RNA polymerase recruitment. Not absolutely required for transcription in vitro, but particularly important in cases where Tbp or Tfb function is not optimal. It dynamically alters the nucleic acid-binding properties of RNA polymerases by stabilizing the initiation complex and destabilizing elongation complexes. Seems to translocate with the RNA polymerase following initiation and acts by binding to the non template strand of the transcription bubble in elongation complexes. The protein is Transcription factor E of Pyrobaculum arsenaticum (strain DSM 13514 / JCM 11321 / PZ6).